Here is a 224-residue protein sequence, read N- to C-terminus: Endoplasmic reticulum vesicle protein 25 (224 aa).

A signal peptide spans 1 to 25 (MIPPRSLGSTAALLLVLLFTTLASA). Residues 26-190 (IKFDLPSNAH…ADTNLSTNMR (165 aa)) lie on the Lumenal side of the membrane. Positions 38-131 (TKCIWNYALS…IPVVTIDLDV (94 aa)) constitute a GOLD domain. Residues 191-211 (VTNFAILTLIALIALGVWQVF) form a helical membrane-spanning segment. At 212 to 224 (HLRGFFKRKYLID) the chain is on the cytoplasmic side.

It belongs to the EMP24/GP25L family.

The protein resides in the endoplasmic reticulum membrane. It is found in the golgi apparatus membrane. Its function is as follows. Constituent of COPII-coated endoplasmic reticulum-derived transport vesicles. Required for efficient transport of a subset of secretory proteins to the Golgi. Facilitates retrograde transport from the Golgi to the endoplasmic reticulum. This is Endoplasmic reticulum vesicle protein 25 (ERV25) from Mycosarcoma maydis (Corn smut fungus).